Reading from the N-terminus, the 506-residue chain is Cysteine--tRNA ligase (506 aa).

Cys34 is a binding site for Zn(2+). Residues 36-46 (PTVYDFAHIGN) carry the 'HIGH' region motif. Zn(2+)-binding residues include Cys230, His269, and Glu273. The 'KMSKS' region signature appears at 302–306 (KMSKS). Lys305 serves as a coordination point for ATP.

The protein belongs to the class-I aminoacyl-tRNA synthetase family. As to quaternary structure, monomer. The cofactor is Zn(2+).

Its subcellular location is the cytoplasm. It carries out the reaction tRNA(Cys) + L-cysteine + ATP = L-cysteinyl-tRNA(Cys) + AMP + diphosphate. The chain is Cysteine--tRNA ligase from Brucella melitensis biotype 2 (strain ATCC 23457).